Consider the following 239-residue polypeptide: 2',3'-cyclic-nucleotide 3'-phosphodiesterase (239 aa).

Active-site proton donor/acceptor residues include His-39 and His-150.

It belongs to the 2H phosphoesterase superfamily. CPD1 family.

The protein resides in the golgi apparatus. The catalysed reaction is ADP-alpha-D-ribose 1'',2''-cyclic phosphate + H2O = ADP-alpha-D-ribose 1''-phosphate + H(+). The enzyme catalyses 2',3'-cyclophospho-AMP + H2O = adenosine 2'-phosphate + H(+). It carries out the reaction 2',3'-cyclophospho-GMP + H2O = guanosine 2'-phosphate + H(+). It catalyses the reaction 2',3'-cyclophospho-UMP + H2O = uridine 2'-phosphate + H(+). The catalysed reaction is 2',3'-cyclophospho-CMP + H2O = cytidine 2'-phosphate + H(+). The enzyme catalyses a nucleoside 2',3'-cyclic phosphate + H2O = a nucleoside 2'-phosphate + H(+). In terms of biological role, involved in the metabolism of ADP-ribose 1',2'-cyclic phosphate which is produced as a consequence of tRNA splicing. This chain is 2',3'-cyclic-nucleotide 3'-phosphodiesterase, found in Saccharomyces cerevisiae (strain ATCC 204508 / S288c) (Baker's yeast).